Consider the following 105-residue polypeptide: Urease subunit beta (105 aa).

Belongs to the urease beta subunit family. Heterotrimer of UreA (gamma), UreB (beta) and UreC (alpha) subunits. Three heterotrimers associate to form the active enzyme.

The protein resides in the cytoplasm. The catalysed reaction is urea + 2 H2O + H(+) = hydrogencarbonate + 2 NH4(+). It functions in the pathway nitrogen metabolism; urea degradation; CO(2) and NH(3) from urea (urease route): step 1/1. The protein is Urease subunit beta of Marinomonas sp. (strain MWYL1).